Reading from the N-terminus, the 201-residue chain is Adenylyl-sulfate kinase (201 aa).

35–42 (GLSGSGKS) is a binding site for ATP. Residue S109 is the Phosphoserine intermediate of the active site.

It belongs to the APS kinase family.

The catalysed reaction is adenosine 5'-phosphosulfate + ATP = 3'-phosphoadenylyl sulfate + ADP + H(+). Its pathway is sulfur metabolism; hydrogen sulfide biosynthesis; sulfite from sulfate: step 2/3. Functionally, catalyzes the synthesis of activated sulfate. The sequence is that of Adenylyl-sulfate kinase from Salmonella paratyphi A (strain AKU_12601).